The sequence spans 222 residues: Flagellar L-ring protein (222 aa).

A signal peptide spans 1–18 (MRRPGAAALAAAALALAG). Cys19 carries the N-palmitoyl cysteine lipid modification. Cys19 carries the S-diacylglycerol cysteine lipid modification.

It belongs to the FlgH family. The basal body constitutes a major portion of the flagellar organelle and consists of four rings (L,P,S, and M) mounted on a central rod.

The protein localises to the cell outer membrane. It localises to the bacterial flagellum basal body. Its function is as follows. Assembles around the rod to form the L-ring and probably protects the motor/basal body from shearing forces during rotation. The protein is Flagellar L-ring protein of Burkholderia mallei (strain ATCC 23344).